A 370-amino-acid polypeptide reads, in one-letter code: 3-dehydroquinate synthase (370 aa).

NAD(+) is bound by residues 112–116 (GVIGD), 136–137 (TT), lysine 149, lysine 158, and 176–179 (TLKT). The Zn(2+) site is built by glutamate 191, histidine 256, and histidine 273.

This sequence belongs to the sugar phosphate cyclases superfamily. Dehydroquinate synthase family. Requires Co(2+) as cofactor. Zn(2+) serves as cofactor. The cofactor is NAD(+).

Its subcellular location is the cytoplasm. It catalyses the reaction 7-phospho-2-dehydro-3-deoxy-D-arabino-heptonate = 3-dehydroquinate + phosphate. The protein operates within metabolic intermediate biosynthesis; chorismate biosynthesis; chorismate from D-erythrose 4-phosphate and phosphoenolpyruvate: step 2/7. Functionally, catalyzes the conversion of 3-deoxy-D-arabino-heptulosonate 7-phosphate (DAHP) to dehydroquinate (DHQ). The sequence is that of 3-dehydroquinate synthase from Prochlorococcus marinus (strain MIT 9211).